Consider the following 50-residue polypeptide: Large ribosomal subunit protein bL36B (50 aa).

The protein belongs to the bacterial ribosomal protein bL36 family.

The polypeptide is Large ribosomal subunit protein bL36B (Pseudomonas aeruginosa (strain UCBPP-PA14)).